The primary structure comprises 385 residues: Serine/threonine-protein kinase H2 (385 aa).

Residues 63–320 (YDIKALIGTG…AGQALDHPWV (258 aa)) form the Protein kinase domain. Residues 69–77 (IGTGSFSRV) and lysine 92 each bind ATP. A disordered region spans residues 342-367 (QRASPHSQSPGSAQSSKSHYSHKSRH). Residues 344–359 (ASPHSQSPGSAQSSKS) are compositionally biased toward low complexity.

The protein belongs to the protein kinase superfamily. CAMK Ser/Thr protein kinase family.

It catalyses the reaction L-seryl-[protein] + ATP = O-phospho-L-seryl-[protein] + ADP + H(+). It carries out the reaction L-threonyl-[protein] + ATP = O-phospho-L-threonyl-[protein] + ADP + H(+). The polypeptide is Serine/threonine-protein kinase H2 (PSKH2) (Homo sapiens (Human)).